Consider the following 200-residue polypeptide: MPIGTPSVPYRLPGSQMERWVDIYTRLGVERILFLGSEVNDGIANSLVAQMLYLDSEDSSKPIYLYINSPGGSVTAGLAIYDTIQYVKSEVVTICVGLAASMGAFLLAAGTKGKRVALPHSRIMIHQPLGGTSRRQASDIEIEAREILRMKEMLNRSLSDMSGQSFDKIEKDTDRDYFLSAEEAKDYGLIDRVISHPNEA.

Residue S101 is the Nucleophile of the active site. H126 is a catalytic residue.

It belongs to the peptidase S14 family. As to quaternary structure, fourteen ClpP subunits assemble into 2 heptameric rings which stack back to back to give a disk-like structure with a central cavity, resembling the structure of eukaryotic proteasomes.

Its subcellular location is the cytoplasm. The enzyme catalyses Hydrolysis of proteins to small peptides in the presence of ATP and magnesium. alpha-casein is the usual test substrate. In the absence of ATP, only oligopeptides shorter than five residues are hydrolyzed (such as succinyl-Leu-Tyr-|-NHMec, and Leu-Tyr-Leu-|-Tyr-Trp, in which cleavage of the -Tyr-|-Leu- and -Tyr-|-Trp bonds also occurs).. Functionally, cleaves peptides in various proteins in a process that requires ATP hydrolysis. Has a chymotrypsin-like activity. Plays a major role in the degradation of misfolded proteins. This Parasynechococcus marenigrum (strain WH8102) protein is ATP-dependent Clp protease proteolytic subunit 3.